Consider the following 247-residue polypeptide: 2,3-bisphosphoglycerate-dependent phosphoglycerate mutase (247 aa).

Substrate contacts are provided by residues 8–15 (RHGESQWN), 21–22 (TG), Arg-60, 87–90 (ERHY), Lys-98, 114–115 (RR), and 183–184 (GN). His-9 serves as the catalytic Tele-phosphohistidine intermediate. Glu-87 serves as the catalytic Proton donor/acceptor.

It belongs to the phosphoglycerate mutase family. BPG-dependent PGAM subfamily.

It catalyses the reaction (2R)-2-phosphoglycerate = (2R)-3-phosphoglycerate. The protein operates within carbohydrate degradation; glycolysis; pyruvate from D-glyceraldehyde 3-phosphate: step 3/5. Functionally, catalyzes the interconversion of 2-phosphoglycerate and 3-phosphoglycerate. The polypeptide is 2,3-bisphosphoglycerate-dependent phosphoglycerate mutase (Chlorobium limicola (strain DSM 245 / NBRC 103803 / 6330)).